The following is a 22-amino-acid chain: Mu-conotoxin GIIIC (22 aa).

3 disulfides stabilise this stretch: cysteine 3/cysteine 15, cysteine 4/cysteine 20, and cysteine 10/cysteine 21. 4-hydroxyproline occurs at positions 6, 7, and 17. Residue alanine 22 is modified to Alanine amide.

It belongs to the conotoxin M superfamily. In terms of tissue distribution, expressed by the venom duct.

Its subcellular location is the secreted. Its function is as follows. Mu-conotoxins block voltage-gated sodium channels (Nav). This toxin shows potent activity on Nav1.4/SCN4A (IC(50)=286 nM), and weak activity on mNav1.6/SCN8A. The chain is Mu-conotoxin GIIIC from Conus geographus (Geography cone).